Here is a 265-residue protein sequence, read N- to C-terminus: 5'-nucleotidase SurE (265 aa).

4 residues coordinate a divalent metal cation: aspartate 8, aspartate 9, serine 39, and asparagine 96.

This sequence belongs to the SurE nucleotidase family. A divalent metal cation serves as cofactor.

It is found in the cytoplasm. The enzyme catalyses a ribonucleoside 5'-phosphate + H2O = a ribonucleoside + phosphate. Nucleotidase that shows phosphatase activity on nucleoside 5'-monophosphates. This Dehalococcoides mccartyi (strain ATCC BAA-2100 / JCM 16839 / KCTC 5957 / BAV1) protein is 5'-nucleotidase SurE.